Reading from the N-terminus, the 329-residue chain is MDMAHERDASSEEEVMGGDLRRGPWTVEEDLLLVNYIAAHGEGRWNSLARSAGLKRTGKSCRLRWLNYLRPDLRRGNITPQEQLLILELHSRWGNRWSKIAQHLPGRTDNEIKNYWRTRVQKHAKQLKCDVNSQQFKDVMRYLWMPRLVERIQAAAAGQQQQQEGGTDTPPLSWQHGGSDGLYESPELPAPDASCWPAEYCAAAGGAQSGGTPAPELSSTTAGSSSLSTDSGAGAQPSWPTQADGAEWFTTACDASSATGGVAMRDTELELAQPPCQGGQTWTTSESSLPGLTFPDLAVADFEIGGFDVDSFWTSMEDDQLWCPTQAAV.

HTH myb-type domains are found at residues 17–69 (GGDL…LNYL) and 70–124 (RPDL…QKHA). DNA-binding regions (H-T-H motif) lie at residues 45-69 (WNSL…LNYL) and 97-120 (WSKI…RTRV). 2 stretches are compositionally biased toward low complexity: residues 155–166 (AAAGQQQQQEGG) and 217–235 (LSST…GAGA). 2 disordered regions span residues 155–189 (AAAG…PELP) and 206–242 (GAQS…WPTQ).

In terms of tissue distribution, highly expressed in leaves. Expressed in roots and shoots. Expressed at low levels in flowers.

The protein localises to the nucleus. In terms of biological role, transcription factor involved in abiotic stress responses. Plays a regulatory role in tolerance to salt, cold, and drought stresses. Positively regulates the expression of genes involved in proline synthesis and transport, and genes involved in reactive oxygen species (ROS) scavenging such as peroxidase, superoxide dismutase and catalase during salt stress. Transactivates stress-related genes, including LEA3, RAB16A and DREB2A during salt stress. In Oryza sativa subsp. japonica (Rice), this protein is Transcription factor MYB2.